A 508-amino-acid polypeptide reads, in one-letter code: Photosystem II CP47 reaction center protein (508 aa).

6 helical membrane-spanning segments follow: residues 21–36, 101–115, 140–156, 203–218, 237–252, and 457–472; these read SVHIMHTALVAGWAGS, IVFSGLCFLAAIWHW, GIHLFLSGVACFGFGAF, IAAGTLGILAGLFHLS, VLSSSIAAVFFAAFVV, and SFALLFFFGHIWHGAR.

The protein belongs to the PsbB/PsbC family. PsbB subfamily. PSII is composed of 1 copy each of membrane proteins PsbA, PsbB, PsbC, PsbD, PsbE, PsbF, PsbH, PsbI, PsbJ, PsbK, PsbL, PsbM, PsbT, PsbX, PsbY, PsbZ, Psb30/Ycf12, at least 3 peripheral proteins of the oxygen-evolving complex and a large number of cofactors. It forms dimeric complexes. Requires Binds multiple chlorophylls. PSII binds additional chlorophylls, carotenoids and specific lipids. as cofactor.

The protein resides in the plastid. It localises to the chloroplast thylakoid membrane. Its function is as follows. One of the components of the core complex of photosystem II (PSII). It binds chlorophyll and helps catalyze the primary light-induced photochemical processes of PSII. PSII is a light-driven water:plastoquinone oxidoreductase, using light energy to abstract electrons from H(2)O, generating O(2) and a proton gradient subsequently used for ATP formation. In Acorus calamus var. americanus (American sweet flag), this protein is Photosystem II CP47 reaction center protein.